Here is a 379-residue protein sequence, read N- to C-terminus: Putative nickel insertion protein (379 aa).

It belongs to the LarC family.

The sequence is that of Putative nickel insertion protein from Methanocaldococcus jannaschii (strain ATCC 43067 / DSM 2661 / JAL-1 / JCM 10045 / NBRC 100440) (Methanococcus jannaschii).